We begin with the raw amino-acid sequence, 332 residues long: Ferredoxin--NADP reductase (332 aa).

FAD-binding residues include threonine 20, glutamate 39, glutamine 47, tyrosine 52, valine 92, phenylalanine 126, aspartate 288, and serine 329.

It belongs to the ferredoxin--NADP reductase type 2 family. In terms of assembly, homodimer. It depends on FAD as a cofactor.

The catalysed reaction is 2 reduced [2Fe-2S]-[ferredoxin] + NADP(+) + H(+) = 2 oxidized [2Fe-2S]-[ferredoxin] + NADPH. This Geobacillus thermodenitrificans (strain NG80-2) protein is Ferredoxin--NADP reductase.